The sequence spans 274 residues: NH(3)-dependent NAD(+) synthetase (274 aa).

Position 46–53 (46–53) interacts with ATP; it reads GISGGQDS. Residue Asp-52 participates in Mg(2+) binding. Deamido-NAD(+) is bound at residue Arg-140. Thr-160 contributes to the ATP binding site. Residue Glu-165 coordinates Mg(2+). Residues Lys-173 and Asp-180 each contribute to the deamido-NAD(+) site. Residues Lys-189 and Thr-211 each coordinate ATP. Position 260-261 (260-261) interacts with deamido-NAD(+); it reads HK.

Belongs to the NAD synthetase family. In terms of assembly, homodimer.

It catalyses the reaction deamido-NAD(+) + NH4(+) + ATP = AMP + diphosphate + NAD(+) + H(+). It participates in cofactor biosynthesis; NAD(+) biosynthesis; NAD(+) from deamido-NAD(+) (ammonia route): step 1/1. Its function is as follows. Catalyzes the ATP-dependent amidation of deamido-NAD to form NAD. Uses ammonia as a nitrogen source. In Streptococcus uberis (strain ATCC BAA-854 / 0140J), this protein is NH(3)-dependent NAD(+) synthetase.